Consider the following 454-residue polypeptide: MSVADFYGSNVEVLLNNDSKARGVITNFDSSNSILQLRLANDSTKSIVTKDIKDLRILPKNEIMPKNGTKSPSTNSTKLKSAETYSSKNKWSMDCDEEFDFAANLEKFDKKQVFAEFREKDKKDPAKLLVSHNKSPNRNYHHKQNVLGPSVKDEFVDLPSAGSQINGIDAVLSSSSNGHVTPGSKKGSRETLKKKPFVDENIPAELHTTTGDILKPITPEQLSQGIALAIAKTSTDIVVENAAQLLSQFVFSVLGGHKRLSSRNHNSQPLVCILVGSHDHASAAVAAGRRLCAIGIKVVLRLLTPFNVDNRQLLMFQAAGGYIPTENFDQFLNKLTSPIELVVDVLTGFHPSIDKNSHALIQWANDLNVLILSVDIPSGYTVQKKNTAILPKWTLALGAVTTTLAQAALVKQAAGVSVFVGNLGTGSQTWAELGILESQVTGQYLAQISCTSTN.

One can recognise a Sm domain in the interval 1–61 (MSVADFYGSN…IKDLRILPKN (61 aa)). The DFDF domain occupies 87–123 (SKNKWSMDCDEEFDFAANLEKFDKKQVFAEFREKDKK). The interval 173-192 (SSSSNGHVTPGSKKGSRETL) is disordered. Residues 222 to 431 (LSQGIALAIA…NLGTGSQTWA (210 aa)) enclose the YjeF N-terminal domain.

It belongs to the EDC3 family. In terms of assembly, homodimer. Interacts with dcp2.

It localises to the cytoplasm. The protein resides in the P-body. Functionally, stimulates decapping of both stable and unstable mRNA during mRNA decay. Stimulates decapping presumably by preventing the DCP1-DCP2 decapping complex from adopting an inactive conformation. Together with pdc1, acts as a scaffolding protein sufficient for the phase transition of the components of the 5' to 3' mRNA degradation machinery to form P-bodies. Intermolecular interactions between the edc3 Sm domain and at least 10 helical leucine-rich motifs in dcp2 and pdc1 build the core of the interaction network of this spontaneous clustering process. This Schizosaccharomyces pombe (strain 972 / ATCC 24843) (Fission yeast) protein is Enhancer of mRNA-decapping protein 3 (edc3).